The sequence spans 393 residues: CCA-adding enzyme (393 aa).

ATP is bound by residues glycine 27 and arginine 30. Residues glycine 27 and arginine 30 each coordinate CTP. Residues aspartate 40 and aspartate 42 each contribute to the Mg(2+) site. Positions 111, 154, 157, 160, and 163 each coordinate ATP. Positions 111, 154, 157, 160, and 163 each coordinate CTP.

This sequence belongs to the tRNA nucleotidyltransferase/poly(A) polymerase family. Bacterial CCA-adding enzyme type 3 subfamily. Homodimer. Mg(2+) serves as cofactor.

The enzyme catalyses a tRNA precursor + 2 CTP + ATP = a tRNA with a 3' CCA end + 3 diphosphate. It carries out the reaction a tRNA with a 3' CCA end + 2 CTP + ATP = a tRNA with a 3' CCACCA end + 3 diphosphate. Its function is as follows. Catalyzes the addition and repair of the essential 3'-terminal CCA sequence in tRNAs without using a nucleic acid template. Adds these three nucleotides in the order of C, C, and A to the tRNA nucleotide-73, using CTP and ATP as substrates and producing inorganic pyrophosphate. tRNA 3'-terminal CCA addition is required both for tRNA processing and repair. Also involved in tRNA surveillance by mediating tandem CCA addition to generate a CCACCA at the 3' terminus of unstable tRNAs. While stable tRNAs receive only 3'-terminal CCA, unstable tRNAs are marked with CCACCA and rapidly degraded. The sequence is that of CCA-adding enzyme from Listeria monocytogenes serotype 4b (strain F2365).